Reading from the N-terminus, the 365-residue chain is Chorismate synthase (365 aa).

Residue Arg46 coordinates NADP(+). Residues 124 to 126 (RAS), Gly284, 299 to 303 (KPTPS), and Arg326 each bind FMN.

This sequence belongs to the chorismate synthase family. FMNH2 serves as cofactor.

It catalyses the reaction 5-O-(1-carboxyvinyl)-3-phosphoshikimate = chorismate + phosphate. Its pathway is metabolic intermediate biosynthesis; chorismate biosynthesis; chorismate from D-erythrose 4-phosphate and phosphoenolpyruvate: step 7/7. Functionally, catalyzes the anti-1,4-elimination of the C-3 phosphate and the C-6 proR hydrogen from 5-enolpyruvylshikimate-3-phosphate (EPSP) to yield chorismate, which is the branch point compound that serves as the starting substrate for the three terminal pathways of aromatic amino acid biosynthesis. This reaction introduces a second double bond into the aromatic ring system. This is Chorismate synthase from Pyrobaculum islandicum (strain DSM 4184 / JCM 9189 / GEO3).